A 145-amino-acid polypeptide reads, in one-letter code: UPF0763 protein CFF8240_1572 (145 aa).

This sequence belongs to the UPF0763 family.

The sequence is that of UPF0763 protein CFF8240_1572 from Campylobacter fetus subsp. fetus (strain 82-40).